The chain runs to 481 residues: Ribosomal RNA small subunit methyltransferase F (481 aa).

Residues 125 to 131 (AAAPGSK), glutamate 149, aspartate 176, and aspartate 194 each bind S-adenosyl-L-methionine. Cysteine 247 serves as the catalytic Nucleophile.

Belongs to the class I-like SAM-binding methyltransferase superfamily. RsmB/NOP family.

The protein resides in the cytoplasm. It catalyses the reaction cytidine(1407) in 16S rRNA + S-adenosyl-L-methionine = 5-methylcytidine(1407) in 16S rRNA + S-adenosyl-L-homocysteine + H(+). Functionally, specifically methylates the cytosine at position 1407 (m5C1407) of 16S rRNA. The sequence is that of Ribosomal RNA small subunit methyltransferase F from Psychromonas ingrahamii (strain DSM 17664 / CCUG 51855 / 37).